The chain runs to 125 residues: Holo-[acyl-carrier-protein] synthase (125 aa).

Mg(2+) contacts are provided by D8 and E57.

It belongs to the P-Pant transferase superfamily. AcpS family. Mg(2+) serves as cofactor.

The protein localises to the cytoplasm. The enzyme catalyses apo-[ACP] + CoA = holo-[ACP] + adenosine 3',5'-bisphosphate + H(+). Transfers the 4'-phosphopantetheine moiety from coenzyme A to a Ser of acyl-carrier-protein. The protein is Holo-[acyl-carrier-protein] synthase of Blochmanniella floridana.